Reading from the N-terminus, the 474-residue chain is Bifunctional protein HldE (474 aa).

The tract at residues M1 to E318 is ribokinase. Position 194–197 (N194–E197) interacts with ATP. D263 is a catalytic residue. Residues F343–G474 form a cytidylyltransferase region.

In the N-terminal section; belongs to the carbohydrate kinase PfkB family. It in the C-terminal section; belongs to the cytidylyltransferase family. Homodimer.

The enzyme catalyses D-glycero-beta-D-manno-heptose 7-phosphate + ATP = D-glycero-beta-D-manno-heptose 1,7-bisphosphate + ADP + H(+). It catalyses the reaction D-glycero-beta-D-manno-heptose 1-phosphate + ATP + H(+) = ADP-D-glycero-beta-D-manno-heptose + diphosphate. Its pathway is nucleotide-sugar biosynthesis; ADP-L-glycero-beta-D-manno-heptose biosynthesis; ADP-L-glycero-beta-D-manno-heptose from D-glycero-beta-D-manno-heptose 7-phosphate: step 1/4. It functions in the pathway nucleotide-sugar biosynthesis; ADP-L-glycero-beta-D-manno-heptose biosynthesis; ADP-L-glycero-beta-D-manno-heptose from D-glycero-beta-D-manno-heptose 7-phosphate: step 3/4. Its function is as follows. Catalyzes the phosphorylation of D-glycero-D-manno-heptose 7-phosphate at the C-1 position to selectively form D-glycero-beta-D-manno-heptose-1,7-bisphosphate. Functionally, catalyzes the ADP transfer from ATP to D-glycero-beta-D-manno-heptose 1-phosphate, yielding ADP-D-glycero-beta-D-manno-heptose. The sequence is that of Bifunctional protein HldE from Pseudomonas syringae pv. syringae (strain B728a).